The chain runs to 348 residues: Rhodopsin (348 aa).

Methionine 1 carries the N-acetylmethionine modification. The Extracellular portion of the chain corresponds to methionine 1–glutamine 36. Asparagine 2 and asparagine 15 each carry an N-linked (GlcNAc...) asparagine glycan. Residues phenylalanine 37 to valine 61 form a helical membrane-spanning segment. The Cytoplasmic segment spans residues threonine 62 to asparagine 73. Residues tyrosine 74–tyrosine 96 traverse the membrane as a helical segment. The Extracellular segment spans residues threonine 97–cysteine 110. Cysteine 110 and cysteine 187 are joined by a disulfide. Residues asparagine 111 to isoleucine 133 traverse the membrane as a helical segment. A 'Ionic lock' involved in activated form stabilization motif is present at residues glutamate 134–tyrosine 136. Residues glutamate 134–histidine 152 are Cytoplasmic-facing. Residues alanine 153–alanine 173 traverse the membrane as a helical segment. The Extracellular portion of the chain corresponds to glycine 174–serine 202. Position 201 (glutamate 201) interacts with Zn(2+). The chain crosses the membrane as a helical span at residues phenylalanine 203–glycine 224. Residues glutamine 225–arginine 252 are Cytoplasmic-facing. A helical membrane pass occupies residues methionine 253–tyrosine 274. The Extracellular segment spans residues isoleucine 275–glycine 284. Residue glutamine 279 participates in Zn(2+) binding. Residues proline 285–methionine 309 traverse the membrane as a helical segment. Lysine 296 bears the N6-(retinylidene)lysine mark. Residues asparagine 310–alanine 348 lie on the Cytoplasmic side of the membrane. S-palmitoyl cysteine attachment occurs at residues cysteine 322 and cysteine 323. The interval aspartate 330 to alanine 348 is interaction with SAG. Serine 334 is modified (phosphoserine). A Phosphothreonine modification is found at threonine 336. At serine 338 the chain carries Phosphoserine. Residues threonine 340 and threonine 342 each carry the phosphothreonine modification. A Phosphoserine modification is found at serine 343.

The protein belongs to the G-protein coupled receptor 1 family. Opsin subfamily. Homodimer. May form a complex composed of RHO, GRK1 and RCVRN in a Ca(2+)-dependent manner; RCVRN prevents the interaction between GRK1 and RHO. Interacts with GRK1. Interacts (phosphorylated form) with SAG. Interacts with GNAT1. Interacts with GNAT3. SAG and G-proteins compete for a common binding site. Interacts with PRCD; the interaction promotes PRCD stability. Forms a complex with ASAP1 and ARF4. Forms a complex with ASAP1, RAB11A, Rabin8/RAB3IP, ARF4 and RAB11FIP3; the complex regulates Golgi-to-cilia rhodopsin/RHO transport in photoreceptors. In terms of processing, phosphorylated on some or all of the serine and threonine residues present in the C-terminal region. After activation by light, phosphorylated by GRK1 (in vitro). Contains one covalently linked retinal chromophore. Upon light absorption, the covalently bound 11-cis-retinal is converted to all-trans-retinal. After hydrolysis of the Schiff base and release of the covalently bound all-trans-retinal, active rhodopsin is regenerated by binding of a fresh molecule of 11-cis-retinal. In terms of tissue distribution, rod shaped photoreceptor cells which mediate vision in dim light.

The protein localises to the membrane. It is found in the cell projection. Its subcellular location is the cilium. The protein resides in the photoreceptor outer segment. Photoreceptor required for image-forming vision at low light intensity. Required for photoreceptor cell viability after birth. Light-induced isomerization of the chromophore 11-cis-retinal to all-trans-retinal triggers a conformational change that activates signaling via G-proteins. Subsequent receptor phosphorylation mediates displacement of the bound G-protein alpha subunit by the arrestin SAG and terminates signaling. The sequence is that of Rhodopsin (RHO) from Homo sapiens (Human).